A 256-amino-acid chain; its full sequence is Hydroxyacylglutathione hydrolase (256 aa).

7 residues coordinate Zn(2+): histidine 55, histidine 57, aspartate 59, histidine 60, histidine 113, aspartate 130, and histidine 168.

It belongs to the metallo-beta-lactamase superfamily. Glyoxalase II family. As to quaternary structure, monomer. Zn(2+) serves as cofactor.

It catalyses the reaction an S-(2-hydroxyacyl)glutathione + H2O = a 2-hydroxy carboxylate + glutathione + H(+). It functions in the pathway secondary metabolite metabolism; methylglyoxal degradation; (R)-lactate from methylglyoxal: step 2/2. Functionally, thiolesterase that catalyzes the hydrolysis of S-D-lactoyl-glutathione to form glutathione and D-lactic acid. The chain is Hydroxyacylglutathione hydrolase from Alkalilimnicola ehrlichii (strain ATCC BAA-1101 / DSM 17681 / MLHE-1).